Consider the following 854-residue polypeptide: Lysine-specific demethylase 3 (854 aa).

The tract at residues 64 to 88 (QRVQQEEESLGQVPPLTEEEQQRHD) is disordered. In terms of domain architecture, JmjC spans 601 to 806 (LRTGNLNIAS…HCYHLTHEFR (206 aa)). Residues His643, Asp645, and His774 each contribute to the Fe cation site.

The protein belongs to the JHDM2-like histone demethylase family. Requires Fe(2+) as cofactor. Expressed in neurons close to the dorsal lateral neurons involved in circadian rhythm.

The protein resides in the nucleus. Its subcellular location is the cytoplasm. The enzyme catalyses N(6),N(6)-dimethyl-L-lysyl(9)-[histone H3] + 2 2-oxoglutarate + 2 O2 = L-lysyl(9)-[histone H3] + 2 formaldehyde + 2 succinate + 2 CO2. Functionally, histone demethylase that specifically demethylates 'Lys-10' of histone H3 (H3K9), thereby playing a central role in histone code. Demethylation of Lys residue generates formaldehyde and succinate. Probably involved in regulation of chromatin structure, promoting expansion of euchromatin. Negatively regulates rhino-dependent piRNA production capacity of several genomic regions; may help define the frontiers of piRNA clusters by regulating histone methylation levels. May be involved in regulation of behavior and circadian rhythms. The sequence is that of Lysine-specific demethylase 3 from Drosophila melanogaster (Fruit fly).